The following is a 218-amino-acid chain: Octanoyltransferase (218 aa).

A BPL/LPL catalytic domain is found at 31 to 207; that stretch reads AQTPDELWLL…QLAAQLGYAE (177 aa). Residues 70-77, 137-139, and 150-152 contribute to the substrate site; these read RGGQVTYH, SLG, and GLA. Cys168 functions as the Acyl-thioester intermediate in the catalytic mechanism.

Belongs to the LipB family.

The protein resides in the cytoplasm. The enzyme catalyses octanoyl-[ACP] + L-lysyl-[protein] = N(6)-octanoyl-L-lysyl-[protein] + holo-[ACP] + H(+). The protein operates within protein modification; protein lipoylation via endogenous pathway; protein N(6)-(lipoyl)lysine from octanoyl-[acyl-carrier-protein]: step 1/2. In terms of biological role, catalyzes the transfer of endogenously produced octanoic acid from octanoyl-acyl-carrier-protein onto the lipoyl domains of lipoate-dependent enzymes. Lipoyl-ACP can also act as a substrate although octanoyl-ACP is likely to be the physiological substrate. The polypeptide is Octanoyltransferase (Azotobacter vinelandii (strain DJ / ATCC BAA-1303)).